Reading from the N-terminus, the 127-residue chain is Small ribosomal subunit protein uS13 (127 aa).

A disordered region spans residues Arg-93 to Lys-127.

Belongs to the universal ribosomal protein uS13 family. As to quaternary structure, part of the 30S ribosomal subunit. Forms a loose heterodimer with protein S19. Forms two bridges to the 50S subunit in the 70S ribosome.

Functionally, located at the top of the head of the 30S subunit, it contacts several helices of the 16S rRNA. In the 70S ribosome it contacts the 23S rRNA (bridge B1a) and protein L5 of the 50S subunit (bridge B1b), connecting the 2 subunits; these bridges are implicated in subunit movement. Contacts the tRNAs in the A and P-sites. This Koribacter versatilis (strain Ellin345) protein is Small ribosomal subunit protein uS13.